The following is a 906-amino-acid chain: Protein translocase subunit SecA (906 aa).

ATP is bound by residues Gln-87, Gly-105–Thr-109, and Asp-512. The disordered stretch occupies residues Leu-839 to Lys-896. Residues Glu-871–Arg-886 are compositionally biased toward basic and acidic residues. Residues Cys-890, Cys-892, Cys-901, and His-902 each contribute to the Zn(2+) site.

This sequence belongs to the SecA family. As to quaternary structure, monomer and homodimer. Part of the essential Sec protein translocation apparatus which comprises SecA, SecYEG and auxiliary proteins SecDF-YajC and YidC. The cofactor is Zn(2+).

The protein resides in the cell inner membrane. Its subcellular location is the cytoplasm. The catalysed reaction is ATP + H2O + cellular proteinSide 1 = ADP + phosphate + cellular proteinSide 2.. Part of the Sec protein translocase complex. Interacts with the SecYEG preprotein conducting channel. Has a central role in coupling the hydrolysis of ATP to the transfer of proteins into and across the cell membrane, serving both as a receptor for the preprotein-SecB complex and as an ATP-driven molecular motor driving the stepwise translocation of polypeptide chains across the membrane. This chain is Protein translocase subunit SecA, found in Aeromonas salmonicida (strain A449).